The sequence spans 268 residues: Undecaprenyl-diphosphatase (268 aa).

The next 7 membrane-spanning stretches (helical) occupy residues phenylalanine 47 to leucine 67, phenylalanine 83 to glycine 103, leucine 109 to valine 129, phenylalanine 144 to valine 164, alanine 184 to leucine 204, isoleucine 217 to phenylalanine 237, and leucine 248 to leucine 268.

Belongs to the UppP family.

It localises to the cell inner membrane. The catalysed reaction is di-trans,octa-cis-undecaprenyl diphosphate + H2O = di-trans,octa-cis-undecaprenyl phosphate + phosphate + H(+). Its function is as follows. Catalyzes the dephosphorylation of undecaprenyl diphosphate (UPP). Confers resistance to bacitracin. The chain is Undecaprenyl-diphosphatase from Rhodopseudomonas palustris (strain ATCC BAA-98 / CGA009).